Consider the following 347-residue polypeptide: Inosamine-phosphate amidinotransferase 1 (347 aa).

Residues Asp179 and His227 contribute to the active site. Cys332 acts as the Amidino-cysteine intermediate in catalysis.

It belongs to the amidinotransferase family. Homodimer.

The catalysed reaction is 1-amino-1-deoxy-scyllo-inositol 4-phosphate + L-arginine = 1-guanidino-1-deoxy-scyllo-inositol 4-phosphate + L-ornithine. It participates in antibiotic biosynthesis; streptomycin biosynthesis. Catalyzes two non-consecutive transamidination reactions. It converts scyllo-inosamine 4-phosphate into N-amidino-scyllo-inosamine 4-phosphate and N1-amidinostreptamine 6-phosphate into streptidine 6-phosphate. The sequence is that of Inosamine-phosphate amidinotransferase 1 (strB1) from Streptomyces griseus.